The primary structure comprises 252 residues: Imidazole glycerol phosphate synthase subunit HisF (252 aa).

Active-site residues include aspartate 11 and aspartate 130.

This sequence belongs to the HisA/HisF family. In terms of assembly, heterodimer of HisH and HisF.

The protein localises to the cytoplasm. The enzyme catalyses 5-[(5-phospho-1-deoxy-D-ribulos-1-ylimino)methylamino]-1-(5-phospho-beta-D-ribosyl)imidazole-4-carboxamide + L-glutamine = D-erythro-1-(imidazol-4-yl)glycerol 3-phosphate + 5-amino-1-(5-phospho-beta-D-ribosyl)imidazole-4-carboxamide + L-glutamate + H(+). It functions in the pathway amino-acid biosynthesis; L-histidine biosynthesis; L-histidine from 5-phospho-alpha-D-ribose 1-diphosphate: step 5/9. In terms of biological role, IGPS catalyzes the conversion of PRFAR and glutamine to IGP, AICAR and glutamate. The HisF subunit catalyzes the cyclization activity that produces IGP and AICAR from PRFAR using the ammonia provided by the HisH subunit. This Staphylococcus epidermidis (strain ATCC 35984 / DSM 28319 / BCRC 17069 / CCUG 31568 / BM 3577 / RP62A) protein is Imidazole glycerol phosphate synthase subunit HisF.